Reading from the N-terminus, the 189-residue chain is Small ribosomal subunit protein uS4 (189 aa).

Positions 107 to 178 constitute an S4 RNA-binding domain; it reads RRLQTQVFKL…AGRVKRKNQG (72 aa). The interval 160–189 is disordered; the sequence is HNSPYGGGRAGRVKRKNQGKGGEEGAEEEE.

Belongs to the universal ribosomal protein uS4 family. In terms of assembly, component of the small ribosomal subunit. Mature ribosomes consist of a small (40S) and a large (60S) subunit. The 40S subunit contains about 32 different proteins and 1 molecule of RNA (18S). The 60S subunit contains 45 different proteins and 3 molecules of RNA (25S, 5.8S and 5S).

The protein localises to the cytoplasm. Its function is as follows. Component of the ribosome, a large ribonucleoprotein complex responsible for the synthesis of proteins in the cell. The small ribosomal subunit (SSU) binds messenger RNAs (mRNAs) and translates the encoded message by selecting cognate aminoacyl-transfer RNA (tRNA) molecules. The large subunit (LSU) contains the ribosomal catalytic site termed the peptidyl transferase center (PTC), which catalyzes the formation of peptide bonds, thereby polymerizing the amino acids delivered by tRNAs into a polypeptide chain. The nascent polypeptides leave the ribosome through a tunnel in the LSU and interact with protein factors that function in enzymatic processing, targeting, and the membrane insertion of nascent chains at the exit of the ribosomal tunnel. RPS9B is involved in nucleolar processing of pre-18S ribosomal RNA and ribosome assembly. This is Small ribosomal subunit protein uS4 (RPS9B) from Candida albicans (strain SC5314 / ATCC MYA-2876) (Yeast).